The sequence spans 315 residues: Olfactory receptor 51L1 (315 aa).

The Extracellular segment spans residues Met-1–Ser-27. A glycan (N-linked (GlcNAc...) asparagine) is linked at Asn-5. The chain crosses the membrane as a helical span at residues Trp-28–Leu-48. The Cytoplasmic portion of the chain corresponds to Ser-49–Ser-56. Residues Leu-57–Leu-77 form a helical membrane-spanning segment. Over Ser-78–Ala-101 the chain is Extracellular. Cys-99 and Cys-191 are joined by a disulfide. The chain crosses the membrane as a helical span at residues Gln-102–Phe-122. The Cytoplasmic portion of the chain corresponds to Asp-123–Ser-141. Residues Val-142 to Pro-162 traverse the membrane as a helical segment. The Extracellular portion of the chain corresponds to Leu-163 to Ser-198. The chain crosses the membrane as a helical span at residues Ile-199–Ser-219. Topologically, residues Tyr-220 to Ala-239 are cytoplasmic. A helical membrane pass occupies residues Leu-240–Val-260. Residues Ser-261–His-275 lie on the Extracellular side of the membrane. A helical membrane pass occupies residues Ile-276–Val-296. Residues Arg-297–Phe-315 are Cytoplasmic-facing.

This sequence belongs to the G-protein coupled receptor 1 family.

The protein resides in the cell membrane. In terms of biological role, odorant receptor. In Homo sapiens (Human), this protein is Olfactory receptor 51L1 (OR51L1).